A 115-amino-acid chain; its full sequence is Promotilin (115 aa).

Positions 1–25 (MVSRKAVAALLVVHVAAMLASQTEA) are cleaved as a signal peptide. Residues 39-72 (QEKERNKGQKKSLSVWQRSGEEGPVDPAEPIREE) form a disordered region.

Belongs to the motilin family.

It localises to the secreted. Plays an important role in the regulation of interdigestive gastrointestinal motility and indirectly causes rhythmic contraction of duodenal and colonic smooth muscle. The polypeptide is Promotilin (MLN) (Homo sapiens (Human)).